The chain runs to 555 residues: TBCC domain-containing protein 1 (555 aa).

A C-CAP/cofactor C-like domain is found at 302–433; it reads PEVSPMVIMS…LEDHMAQVGL (132 aa).

It belongs to the TBCC family.

Its subcellular location is the cytoplasm. The protein localises to the cytoskeleton. It is found in the microtubule organizing center. It localises to the centrosome. The protein resides in the spindle pole. Its function is as follows. May play a role in the regulation of centrosome and Golgi apparatus positioning. In Gallus gallus (Chicken), this protein is TBCC domain-containing protein 1 (TBCCD1).